We begin with the raw amino-acid sequence, 280 residues long: NAD kinase (280 aa).

Residue Asp67 is the Proton acceptor of the active site. NAD(+)-binding positions include 67 to 68 (DG), Arg72, 138 to 139 (ND), Asp167, Ala175, 178 to 183 (TAYSLS), and Gln237.

The protein belongs to the NAD kinase family. The cofactor is a divalent metal cation.

Its subcellular location is the cytoplasm. It catalyses the reaction NAD(+) + ATP = ADP + NADP(+) + H(+). Involved in the regulation of the intracellular balance of NAD and NADP, and is a key enzyme in the biosynthesis of NADP. Catalyzes specifically the phosphorylation on 2'-hydroxyl of the adenosine moiety of NAD to yield NADP. The chain is NAD kinase from Aeropyrum pernix (strain ATCC 700893 / DSM 11879 / JCM 9820 / NBRC 100138 / K1).